A 552-amino-acid chain; its full sequence is Probable protein kinase UbiB (552 aa).

The Protein kinase domain maps to 121–504 (HFDTVPLASA…QGLQRRVVNA (384 aa)). Residues 127 to 135 (LASASISQV) and Lys149 contribute to the ATP site. Asp284 serves as the catalytic Proton acceptor. The next 2 helical transmembrane spans lie at 501–521 (VVNA…YGLH) and 530–550 (IPVW…SAWW).

The protein belongs to the ABC1 family. UbiB subfamily.

It is found in the cell inner membrane. The protein operates within cofactor biosynthesis; ubiquinone biosynthesis [regulation]. In terms of biological role, is probably a protein kinase regulator of UbiI activity which is involved in aerobic coenzyme Q (ubiquinone) biosynthesis. This chain is Probable protein kinase UbiB, found in Xylella fastidiosa (strain M23).